The sequence spans 498 residues: ATP synthase subunit beta, chloroplastic (498 aa).

172 to 179 contributes to the ATP binding site; it reads GGAGVGKT.

This sequence belongs to the ATPase alpha/beta chains family. F-type ATPases have 2 components, CF(1) - the catalytic core - and CF(0) - the membrane proton channel. CF(1) has five subunits: alpha(3), beta(3), gamma(1), delta(1), epsilon(1). CF(0) has four main subunits: a(1), b(1), b'(1) and c(9-12).

Its subcellular location is the plastid. The protein localises to the chloroplast thylakoid membrane. The enzyme catalyses ATP + H2O + 4 H(+)(in) = ADP + phosphate + 5 H(+)(out). In terms of biological role, produces ATP from ADP in the presence of a proton gradient across the membrane. The catalytic sites are hosted primarily by the beta subunits. The polypeptide is ATP synthase subunit beta, chloroplastic (Myristica fragrans (Nutmeg)).